The primary structure comprises 547 residues: Sterol carrier protein 2 (547 aa).

Residue S3 is modified to Phosphoserine. An N6-acetyllysine; alternate modification is found at K132. Residue K132 is modified to N6-succinyllysine; alternate. The residue at position 168 (K168) is an N6-succinyllysine. Residues K173 and K177 each carry the N6-acetyllysine modification. K183 bears the N6-acetyllysine; alternate mark. Residue K183 is modified to N6-succinyllysine; alternate. K282 is modified (N6-succinyllysine). K341, K432, K438, K443, and K453 each carry N6-acetyllysine; alternate. N6-succinyllysine; alternate is present on residues K341, K432, K438, K443, and K453. In terms of domain architecture, SCP2 spans 433–543 (ANLVFKEIEK…KLQNLQLQPG (111 aa)). Position 464 is an N6-succinyllysine (K464). K470 carries the N6-acetyllysine; alternate modification. N6-succinyllysine; alternate is present on K470. K479 bears the N6-succinyllysine mark. K491 is subject to N6-acetyllysine. N6-succinyllysine is present on residues K492 and K511. S516 is modified (phosphoserine). An N6-succinyllysine mark is found at K522 and K534. Positions 545 to 547 (AKL) match the Microbody targeting signal motif.

The protein in the N-terminal section; belongs to the thiolase-like superfamily. Thiolase family. In terms of assembly, interacts with PEX5; the interaction is essential for peroxisomal import. Post-translationally, preSCP2, a protein with a molecular mass of about 15 kDa, is processed into its mature form (SCP2) by proteolytic cleavage of a 20 residue leader sequence after translocation into peroxisomes. In terms of tissue distribution, liver, fibroblasts, and placenta.

It localises to the peroxisome. It is found in the cytoplasm. The protein localises to the mitochondrion. The protein resides in the endoplasmic reticulum. It catalyses the reaction choloyl-CoA + propanoyl-CoA = 3alpha,7alpha,12alpha-trihydroxy-24-oxo-5beta-cholestan-26-oyl-CoA + CoA. The enzyme catalyses 4,8,12-trimethyltridecanoyl-CoA + propanoyl-CoA = 3-oxopristanoyl-CoA + CoA. It carries out the reaction an acyl-CoA + acetyl-CoA = a 3-oxoacyl-CoA + CoA. The catalysed reaction is hexanoyl-CoA + acetyl-CoA = 3-oxooctanoyl-CoA + CoA. It catalyses the reaction tetradecanoyl-CoA + acetyl-CoA = 3-oxohexadecanoyl-CoA + CoA. The enzyme catalyses 3-oxohexadecanedioyl-CoA + CoA = tetradecanedioyl-CoA + acetyl-CoA. It carries out the reaction propanoyl-CoA + tetradecanoyl-CoA = 3-oxo-2-methylhexadecanoyl-CoA + CoA. The catalysed reaction is butanoyl-CoA + acetyl-CoA = 3-oxohexanoyl-CoA + CoA. It catalyses the reaction octanoyl-CoA + acetyl-CoA = 3-oxodecanoyl-CoA + CoA. The enzyme catalyses decanoyl-CoA + acetyl-CoA = 3-oxododecanoyl-CoA + CoA. It carries out the reaction dodecanoyl-CoA + acetyl-CoA = 3-oxotetradecanoyl-CoA + CoA. The catalysed reaction is hexadecanoyl-CoA + acetyl-CoA = 3-oxooctadecanoyl-CoA + CoA. It catalyses the reaction 3-oxo-(9Z-octadecenoyl)-CoA + CoA = (7Z)-hexadecenoyl-CoA + acetyl-CoA. The enzyme catalyses 7-dehydrocholesterol(in) = 7-dehydrocholesterol(out). Its function is as follows. Plays a crucial role in the peroxisomal oxidation of branched-chain fatty acids. Catalyzes the last step of the peroxisomal beta-oxidation of branched chain fatty acids and the side chain of the bile acid intermediates di- and trihydroxycoprostanic acids (DHCA and THCA). Also active with medium and long straight chain 3-oxoacyl-CoAs. Stimulates the microsomal conversion of 7-dehydrocholesterol to cholesterol and transfers phosphatidylcholine and 7-dehydrocholesterol between membrances, in vitro. Isoforms SCP2 and SCPx cooperate in peroxisomal oxidation of certain naturally occurring tetramethyl-branched fatty acyl-CoAs. Functionally, mediates the transfer of all common phospholipids, cholesterol and gangliosides from the endoplasmic reticulum to the plasma membrane. May play a role in regulating steroidogenesis. Stimulates the microsomal conversion of 7-dehydrocholesterol to cholesterol. Also binds fatty acids and fatty acyl Coenzyme A (CoA) such as phytanoyl-CoA. Involved in the regulation phospholipid synthesis in endoplasmic reticulum enhancing the incorporation of exogenous fatty acid into glycerides. Seems to stimulate the rate-limiting step in phosphatidic acid formation mediated by GPAT3. Isoforms SCP2 and SCPx cooperate in peroxisomal oxidation of certain naturally occurring tetramethyl-branched fatty acyl-CoAs. This chain is Sterol carrier protein 2, found in Homo sapiens (Human).